Reading from the N-terminus, the 496-residue chain is Lysine--tRNA ligase (496 aa).

Glu409 and Glu416 together coordinate Mg(2+).

The protein belongs to the class-II aminoacyl-tRNA synthetase family. Homodimer. Requires Mg(2+) as cofactor.

The protein localises to the cytoplasm. It catalyses the reaction tRNA(Lys) + L-lysine + ATP = L-lysyl-tRNA(Lys) + AMP + diphosphate. This is Lysine--tRNA ligase from Streptococcus pneumoniae (strain CGSP14).